Reading from the N-terminus, the 170-residue chain is Protein SprT (170 aa).

A SprT-like domain is found at serine 25 to valine 165. Histidine 78 is a Zn(2+) binding site. Glutamate 79 is an active-site residue. Histidine 82 provides a ligand contact to Zn(2+).

This sequence belongs to the SprT family. It depends on Zn(2+) as a cofactor.

The protein resides in the cytoplasm. This Actinobacillus succinogenes (strain ATCC 55618 / DSM 22257 / CCUG 43843 / 130Z) protein is Protein SprT.